A 502-amino-acid chain; its full sequence is Glycerol kinase (502 aa).

T13 serves as a coordination point for ADP. ATP contacts are provided by T13, T14, and S15. T13 provides a ligand contact to sn-glycerol 3-phosphate. R17 serves as a coordination point for ADP. Positions 83, 84, 135, and 245 each coordinate sn-glycerol 3-phosphate. The glycerol site is built by R83, E84, Y135, D245, and Q246. Positions 267 and 310 each coordinate ADP. 4 residues coordinate ATP: T267, G310, Q314, and G411. ADP contacts are provided by G411 and N415.

This sequence belongs to the FGGY kinase family. As to quaternary structure, homotetramer and homodimer (in equilibrium).

The enzyme catalyses glycerol + ATP = sn-glycerol 3-phosphate + ADP + H(+). It participates in polyol metabolism; glycerol degradation via glycerol kinase pathway; sn-glycerol 3-phosphate from glycerol: step 1/1. Activated by phosphorylation and inhibited by fructose 1,6-bisphosphate (FBP). Functionally, key enzyme in the regulation of glycerol uptake and metabolism. Catalyzes the phosphorylation of glycerol to yield sn-glycerol 3-phosphate. This is Glycerol kinase from Lactobacillus delbrueckii subsp. bulgaricus (strain ATCC BAA-365 / Lb-18).